The sequence spans 172 residues: NADH-ubiquinone oxidoreductase chain 6 (172 aa).

The next 5 helical transmembrane spans lie at 1 to 21 (MAFYLSFLMAALVGGMIAIAS), 24 to 44 (APYFAAFGLVVVAGVGCGILV), 53 to 73 (LILFLIYLGGMLVVFAYSAAL), 86 to 106 (VVFWRVMVYGLVVIVAAGFLL), and 140 to 160 (GKMLVICAWVLLLTLFVVLEV).

It belongs to the complex I subunit 6 family. In terms of assembly, core subunit of respiratory chain NADH dehydrogenase (Complex I) which is composed of 45 different subunits.

Its subcellular location is the mitochondrion inner membrane. It carries out the reaction a ubiquinone + NADH + 5 H(+)(in) = a ubiquinol + NAD(+) + 4 H(+)(out). Core subunit of the mitochondrial membrane respiratory chain NADH dehydrogenase (Complex I) which catalyzes electron transfer from NADH through the respiratory chain, using ubiquinone as an electron acceptor. Essential for the catalytic activity and assembly of complex I. This is NADH-ubiquinone oxidoreductase chain 6 (mt-nd6) from Danio rerio (Zebrafish).